Here is a 220-residue protein sequence, read N- to C-terminus: PKHD-type hydroxylase sync_1544 (220 aa).

Residues lysine 79 to serine 173 form the Fe2OG dioxygenase domain. Histidine 97, aspartate 99, and histidine 154 together coordinate Fe cation. Residue arginine 164 participates in 2-oxoglutarate binding.

Fe(2+) is required as a cofactor. L-ascorbate serves as cofactor.

In Synechococcus sp. (strain CC9311), this protein is PKHD-type hydroxylase sync_1544.